We begin with the raw amino-acid sequence, 203 residues long: Pyridoxine/pyridoxamine 5'-phosphate oxidase (203 aa).

FMN is bound by residues 51 to 56 (RMVLLK), 66 to 67 (YT), R72, K73, and Q95. Residue K56 participates in substrate binding. 3 residues coordinate substrate: Y113, R117, and S121. FMN-binding positions include 130–131 (QS) and W175. 181 to 183 (RLH) contacts substrate. Position 185 (R185) interacts with FMN.

This sequence belongs to the pyridoxamine 5'-phosphate oxidase family. In terms of assembly, homodimer. FMN serves as cofactor.

The enzyme catalyses pyridoxamine 5'-phosphate + O2 + H2O = pyridoxal 5'-phosphate + H2O2 + NH4(+). It catalyses the reaction pyridoxine 5'-phosphate + O2 = pyridoxal 5'-phosphate + H2O2. Its pathway is cofactor metabolism; pyridoxal 5'-phosphate salvage; pyridoxal 5'-phosphate from pyridoxamine 5'-phosphate: step 1/1. The protein operates within cofactor metabolism; pyridoxal 5'-phosphate salvage; pyridoxal 5'-phosphate from pyridoxine 5'-phosphate: step 1/1. Functionally, catalyzes the oxidation of either pyridoxine 5'-phosphate (PNP) or pyridoxamine 5'-phosphate (PMP) into pyridoxal 5'-phosphate (PLP). This Novosphingobium aromaticivorans (strain ATCC 700278 / DSM 12444 / CCUG 56034 / CIP 105152 / NBRC 16084 / F199) protein is Pyridoxine/pyridoxamine 5'-phosphate oxidase.